A 288-amino-acid polypeptide reads, in one-letter code: MALFRKKDKYIRITPNNSLKGSVSQVIPEVPDELFAKCPACKHMIYKKDLGLAKICPTCSYNFRISAQERLTLTVDEGSFQELFTSIETKDPLRFPGYQEKLQKAKETTGLHEAVLTGKAMVKEQKIALAIMDSHFIMASMGTVVGEKITRLFELAIEENLPVVIFTASGGARMQEGIMSLMQMAKVSAAVKRHSNAGLFYLTILTDPTTGGVTASFAMEGDIILAEPQSLVGFAGRRVIETTVRENLPDDFQKAEFLQDHGFVDAIVKRTELRDKVAHLVAFHGGGQ.

Residues 34–288 enclose the CoA carboxyltransferase N-terminal domain; sequence LFAKCPACKH…HLVAFHGGGQ (255 aa). Zn(2+) contacts are provided by Cys-38, Cys-41, Cys-56, and Cys-59. Residues 38-59 form a C4-type zinc finger; it reads CPACKHMIYKKDLGLAKICPTC.

Belongs to the AccD/PCCB family. Acetyl-CoA carboxylase is a heterohexamer composed of biotin carboxyl carrier protein (AccB), biotin carboxylase (AccC) and two subunits each of ACCase subunit alpha (AccA) and ACCase subunit beta (AccD). Zn(2+) serves as cofactor.

It localises to the cytoplasm. It catalyses the reaction N(6)-carboxybiotinyl-L-lysyl-[protein] + acetyl-CoA = N(6)-biotinyl-L-lysyl-[protein] + malonyl-CoA. It functions in the pathway lipid metabolism; malonyl-CoA biosynthesis; malonyl-CoA from acetyl-CoA: step 1/1. Component of the acetyl coenzyme A carboxylase (ACC) complex. Biotin carboxylase (BC) catalyzes the carboxylation of biotin on its carrier protein (BCCP) and then the CO(2) group is transferred by the transcarboxylase to acetyl-CoA to form malonyl-CoA. The polypeptide is Acetyl-coenzyme A carboxylase carboxyl transferase subunit beta (Streptococcus dysgalactiae subsp. equisimilis (strain GGS_124)).